The sequence spans 870 residues: MOG interacting and ectopic P-granules protein 1 (870 aa).

Residues methionine 1 to alanine 244 are disordered. Residues leucine 9–valine 20 show a composition bias toward polar residues. The span at glutamate 41–methionine 51 shows a compositional bias: basic and acidic residues. 3 stretches are compositionally biased toward acidic residues: residues glutamate 77 to glycine 99, isoleucine 129 to glutamate 142, and isoleucine 203 to glutamine 214. C2H2-type zinc fingers lie at residues histidine 421–histidine 444 and phenylalanine 450–histidine 473. The segment at tyrosine 486–cysteine 508 adopts a CCHC-type zinc-finger fold. Composition is skewed to polar residues over residues leucine 673 to threonine 688 and lysine 695 to serine 708. A disordered region spans residues leucine 673 to serine 708. C2H2-type zinc fingers lie at residues phenylalanine 713 to histidine 736, leucine 753 to histidine 776, glycine 794 to histidine 815, and tyrosine 826 to histidine 849. A disordered region spans residues serine 847–aspartate 870. A compositionally biased stretch (basic and acidic residues) spans proline 850–aspartate 870.

In terms of assembly, interacts with hda-1, let-418, lin-1, mog-1, mog-4, mog-5, mog-6, pie-1 and unc-98. In terms of processing, sumoylated. In terms of tissue distribution, expressed in somatic cells of embryos, the head, hypodermis and tail of larvae and the germline of adults, including oocytes but not mature sperm and spermatocytes.

Its subcellular location is the nucleus. Functionally, has a broad role in development, specifically in the genetic pathway SynMuvB that negatively regulates specification of the vulval cell fate. Required for fem-3 3'-UTR-mediated repression in the regulation of the sperm/oocyte switch. Acts by regulating the translation of fem-3 mRNA, by binding to its 3'-UTR. This Caenorhabditis elegans protein is MOG interacting and ectopic P-granules protein 1.